A 149-amino-acid chain; its full sequence is MVDDAGTAESQRGKQTPADSLEQLRMLPLPPPQIRIRPWWFPVQELRDPLVFYLEAWLADELFGPDRAMIPEMEWTSQALMTVDIVDSGNLVEITVFGRPSVQNRVKSMLLCLASFHREHRARAEKMKHLEKNLKAHASDPHSPQDPVA.

The interval 1 to 23 is disordered; that stretch reads MVDDAGTAESQRGKQTPADSLEQ. A compositionally biased stretch (polar residues) spans 8-18; sequence AESQRGKQTPA. Residues 49–110 enclose the KH; atypical domain; the sequence is PLVFYLEAWL…SVQNRVKSML (62 aa).

This sequence belongs to the KHDC1 family. Component of the subcortical maternal complex (SCMC), at least composed of NLRP5, KHDC3, OOEP, and TLE6. Within the complex, interacts with NLRP5, KHDC3 and TLE6. As part of the SCMC interacts with the SCMC-associated protein NLRP4F. The SCMC may facilitate translocation of its components between the nuclear and cytoplasmic compartments. Forms a scaffold complex with KHDC3/FILIA, and interacts with BLM and TRIM25 at DNA replication forks.

The protein localises to the cytoplasm. It is found in the nucleus. Component of the subcortical maternal complex (SCMC), a multiprotein complex that plays a key role in early embryonic development. The SCMC complex is a structural constituent of cytoplasmic lattices, which consist in fibrous structures found in the cytoplasm of oocytes and preimplantation embryos. They are required to store maternal proteins critical for embryonic development, such as proteins that control epigenetic reprogramming of the preimplantation embryo, and prevent their degradation or activation. As part of the OOEP-KHDC3 scaffold, recruits BLM and TRIM25 to DNA replication forks, thereby promoting the ubiquitination of BLM by TRIM25, enhancing BLM retainment at replication forks and therefore promoting stalled replication fork restart. Positively regulates the homologous recombination-mediated DNA double-strand break (DSB) repair pathway by regulating ATM activation and RAD51 recruitment to DSBs in oocytes. Thereby contributes to oocyte survival and the resumption and completion of meiosis. The polypeptide is Oocyte-expressed protein homolog (OOEP) (Papio anubis (Olive baboon)).